Consider the following 423-residue polypeptide: Histidine--tRNA ligase (423 aa).

Belongs to the class-II aminoacyl-tRNA synthetase family. As to quaternary structure, homodimer.

The protein resides in the cytoplasm. The enzyme catalyses tRNA(His) + L-histidine + ATP = L-histidyl-tRNA(His) + AMP + diphosphate + H(+). This chain is Histidine--tRNA ligase, found in Prochlorococcus marinus (strain MIT 9211).